The following is a 162-amino-acid chain: Caveolin-2 (162 aa).

The Cytoplasmic segment spans residues 1–86; the sequence is MGLETEKADV…FEISKYVMYK (86 aa). Residue Y19 is modified to Phosphotyrosine; by SRC. A phosphoserine mark is found at S20 and S23. At Y27 the chain carries Phosphotyrosine; by SRC. S36 is subject to Phosphoserine. Positions 87–107 form an intramembrane region, helical; it reads FLTVFLAIPLAFIAGILFATL. The Cytoplasmic portion of the chain corresponds to 108–162; it reads SCLHIWILMPFVKTCLMVLPSVQTIWKSVTDVFIAPLCTSIGRSFSSVSLQLSQD.

It belongs to the caveolin family. Monomer or homodimer. Interacts with CAV1; the interaction forms a stable heterooligomeric complex that is required for targeting to lipid rafts and for caveolae formation. Tyrosine phosphorylated forms do not form heterooligomers with the Tyr-19-phosphorylated form existing as a monomer or dimer, and the Tyr-27-form as a monomer only. Interacts (tyrosine phosphorylated form) with the SH2 domain-containing proteins, RASA1, NCK1 and SRC. Interacts (tyrosine phosphorylated form) with INSR, the interaction (Tyr-27-phosphorylated form) is increased on insulin stimulation. Interacts (Tyr-19 phosphorylated form) with MAPK1 (phosphorylated form); the interaction, promoted by insulin, leads to nuclear location and MAPK1 activation. Interacts with STAT3; the interaction is increased on insulin-induced tyrosine phosphorylation leading to STAT activation. Post-translationally, phosphorylated on serine and tyrosine residues. CAV1 promotes phosphorylation on Ser-23 which then targets the complex to the plasma membrane, lipid rafts and caveolae. Phosphorylation on Ser-36 appears to modulate mitosis in endothelial cells. Phosphorylation on both Tyr-19 and Tyr-27 is required for insulin-induced 'Ser-727' phosphorylation of STAT3 and its activation. Phosphorylation on Tyr-19 is required for insulin-induced phosphorylation of MAPK1 and DNA binding of STAT3. Tyrosine phosphorylation is induced by both EGF and insulin (By. similarity).

It localises to the nucleus. The protein resides in the cytoplasm. Its subcellular location is the golgi apparatus membrane. It is found in the cell membrane. The protein localises to the membrane. It localises to the caveola. Functionally, may act as a scaffolding protein within caveolar membranes. Interacts directly with G-protein alpha subunits and can functionally regulate their activity. Acts as an accessory protein in conjunction with CAV1 in targeting to lipid rafts and driving caveolae formation. The Ser-36 phosphorylated form has a role in modulating mitosis in endothelial cells. Positive regulator of cellular mitogenesis of the MAPK signaling pathway. Required for the insulin-stimulated nuclear translocation and activation of MAPK1 and STAT3, and the subsequent regulation of cell cycle progression. This Papio anubis (Olive baboon) protein is Caveolin-2 (CAV2).